Consider the following 146-residue polypeptide: Probable glycine cleavage system H protein 3 (146 aa).

The Lipoyl-binding domain occupies 29 to 111 (VVSVGMTDLG…PYGSWIIKVS (83 aa)). Lys-71 is modified (N6-lipoyllysine).

It belongs to the GcvH family. The glycine cleavage system is composed of four proteins: P, T, L and H. (R)-lipoate serves as cofactor.

In terms of biological role, the glycine cleavage system catalyzes the degradation of glycine. The H protein shuttles the methylamine group of glycine from the P protein to the T protein. This is Probable glycine cleavage system H protein 3 from Sulfolobus acidocaldarius (strain ATCC 33909 / DSM 639 / JCM 8929 / NBRC 15157 / NCIMB 11770).